Reading from the N-terminus, the 365-residue chain is Endophilin-B1 (365 aa).

M1 is subject to N-acetylmethionine. The interval 1-30 (MNIMDFNVKKLAADAGTFLSRAVQFTEEKL) is membrane-binding amphipathic helix. Residues 1 to 37 (MNIMDFNVKKLAADAGTFLSRAVQFTEEKLGQAEKTE) are required for membrane binding. Residues 27–261 (EEKLGQAEKT…LGSFPSNYVS (235 aa)) form the BAR domain. Residue T145 is modified to Phosphothreonine; by CDK5. Positions 156-185 (KTIAKERKLLQNKRLDLDAAKTRLKKAKAA) form a coiled coil. The SH3 domain occupies 305 to 365 (SSTRKARVLY…VPITYLELLN (61 aa)).

Belongs to the endophilin family. As to quaternary structure, homodimer, and heterodimer with SH3GLB2. Binds BAX; induction of apoptosis augments BAX binding. Binds DNM1, HTT, AMPH, BIN1 and ARFGAP1. Interacts with UVRAG; UVRAG bridges the interaction to BECN1 indicative for an association with the PI3K complex II (PI3KC3-C2). Phosphorylated at Thr-145 by CDK5; this phosphorylation is required for autophagy induction in starved neurons and facilitates homodimerization. As to expression, expressed in brain, heart, lung and spleen. Low level in liver and testis.

It is found in the cytoplasm. It localises to the golgi apparatus membrane. Its subcellular location is the mitochondrion outer membrane. The protein localises to the cytoplasmic vesicle. The protein resides in the autophagosome membrane. It is found in the midbody. May be required for normal outer mitochondrial membrane dynamics. Required for coatomer-mediated retrograde transport in certain cells. May recruit other proteins to membranes with high curvature. May promote membrane fusion. Involved in activation of caspase-dependent apoptosis by promoting BAX/BAK1 activation. Involved in caspase-independent apoptosis during nutrition starvation and involved in the regulation of autophagy. Activates lipid kinase activity of PIK3C3 during autophagy probably by associating with the PI3K complex II (PI3KC3-C2). Associated with PI3KC3-C2 during autophagy may regulate the trafficking of ATG9A from the Golgi complex to the peripheral cytoplasm for the formation of autophagosomes by inducing Golgi membrane tubulation and fragmentation. Involved in regulation of degradative endocytic trafficking and cytokinesis, probably in the context of PI3KC3-C2. This chain is Endophilin-B1, found in Rattus norvegicus (Rat).